A 638-amino-acid chain; its full sequence is 1-deoxy-D-xylulose-5-phosphate synthase (638 aa).

Thiamine diphosphate contacts are provided by residues His79 and 120 to 122; that span reads AHS. Mg(2+) is bound at residue Asp151. Thiamine diphosphate contacts are provided by residues 152–153, Asn180, Tyr289, and Glu371; that span reads GA. Asn180 lines the Mg(2+) pocket.

It belongs to the transketolase family. DXPS subfamily. Homodimer. Mg(2+) is required as a cofactor. The cofactor is thiamine diphosphate.

The enzyme catalyses D-glyceraldehyde 3-phosphate + pyruvate + H(+) = 1-deoxy-D-xylulose 5-phosphate + CO2. The protein operates within metabolic intermediate biosynthesis; 1-deoxy-D-xylulose 5-phosphate biosynthesis; 1-deoxy-D-xylulose 5-phosphate from D-glyceraldehyde 3-phosphate and pyruvate: step 1/1. Catalyzes the acyloin condensation reaction between C atoms 2 and 3 of pyruvate and glyceraldehyde 3-phosphate to yield 1-deoxy-D-xylulose-5-phosphate (DXP). The chain is 1-deoxy-D-xylulose-5-phosphate synthase from Rhizobium rhizogenes (strain K84 / ATCC BAA-868) (Agrobacterium radiobacter).